The sequence spans 184 residues: Photosystem I assembly protein Ycf4 (184 aa).

A run of 2 helical transmembrane segments spans residues 22–42 and 57–77; these read FCWA…GTSS and IIFF…LFIS.

The protein belongs to the Ycf4 family.

It localises to the plastid. The protein localises to the chloroplast thylakoid membrane. Its function is as follows. Seems to be required for the assembly of the photosystem I complex. In Lobularia maritima (Sweet alyssum), this protein is Photosystem I assembly protein Ycf4.